Here is an 87-residue protein sequence, read N- to C-terminus: DNA-directed RNA polymerase subunit omega (87 aa).

It belongs to the RNA polymerase subunit omega family. As to quaternary structure, the RNAP catalytic core consists of 2 alpha, 1 beta, 1 beta' and 1 omega subunit. When a sigma factor is associated with the core the holoenzyme is formed, which can initiate transcription.

The catalysed reaction is RNA(n) + a ribonucleoside 5'-triphosphate = RNA(n+1) + diphosphate. In terms of biological role, promotes RNA polymerase assembly. Latches the N- and C-terminal regions of the beta' subunit thereby facilitating its interaction with the beta and alpha subunits. The polypeptide is DNA-directed RNA polymerase subunit omega (Pseudomonas putida (strain W619)).